Here is a 352-residue protein sequence, read N- to C-terminus: Sphingosine 1-phosphate receptor 2 (352 aa).

Residues 1–34 are Extracellular-facing; the sequence is MGGLYSEYLNPEKVLEHYNYTKETLDMQETTSRK. Asparagine 19 carries N-linked (GlcNAc...) asparagine glycosylation. Residues 35 to 59 traverse the membrane as a helical segment; the sequence is VASAFIIILCCAIVVENLLVLIAVA. Topologically, residues 60–66 are cytoplasmic; the sequence is RNSKFHS. The helical transmembrane segment at 67 to 95 threads the bilayer; the sequence is AMYLFLGNLAASDLLAGVAFVANTLLSGH. Residues 96-109 are Extracellular-facing; it reads VTLSLTPVQWFARE. A helical transmembrane segment spans residues 110–128; sequence GSAFITLSASVFSLLAIAI. Over 129 to 147 the chain is Cytoplasmic; sequence ERQVALAKVKLYGSDKSCR. The helical transmembrane segment at 148 to 173 threads the bilayer; the sequence is MLMLIGASWLISLILGGLPILGWNCL. Residues 174–189 are Extracellular-facing; it reads NQLEACSTVLPLYAKH. The chain crosses the membrane as a helical span at residues 190–210; that stretch reads YVLCVVTIFSVILLAIVALYV. Topologically, residues 211–233 are cytoplasmic; it reads RIYFVVRSSHADVAGPQTLALLK. Residues 234–255 traverse the membrane as a helical segment; that stretch reads TVTIVLGVFIICWLPAFSILLL. At 256–271 the chain is on the extracellular side; it reads DSTCPVRACPVLYKAH. A helical transmembrane segment spans residues 272 to 292; it reads YFFAFATLNSLLNPVIYTWRS. Topologically, residues 293–352 are cytoplasmic; it reads RDLRREVLRPLQCWRRGKGVTGRRGGNPGHRLLPLRSSSSLERGMHMPTSPTFLEGNTVV. Cysteine 305 is lipidated: S-palmitoyl cysteine. Positions 333 to 352 are disordered; sequence LERGMHMPTSPTFLEGNTVV.

The protein belongs to the G-protein coupled receptor 1 family. Most abundant in heart and lung; low, but clearly observed in kidney, liver and thymus; much lower but detectable in brain, testis, stomach and intestine. Not significantly detected in any of the sections of embryonic day (E) 14-18, except in embryonic brain.

The protein localises to the cell membrane. In terms of biological role, receptor for the lysosphingolipid sphingosine 1-phosphate (S1P). S1P is a bioactive lysophospholipid that elicits diverse physiological effects on most types of cells and tissues. Receptor for the chemokine-like protein FAM19A5. Mediates the inhibitory effect of FAM19A5 on vascular smooth muscle cell proliferation and migration. In lymphoid follicles, couples the binding of S1P to the activation of GNA13 and downstream inhibition of AKT activation leading to suppression of germinal center (GC) B cell growth and migration outside the GC niche. This is Sphingosine 1-phosphate receptor 2 (S1pr2) from Mus musculus (Mouse).